The sequence spans 489 residues: Glycogen synthase (489 aa).

Arg-20 is a binding site for ADP-alpha-D-glucose.

Belongs to the glycosyltransferase 1 family. Bacterial/plant glycogen synthase subfamily.

The catalysed reaction is [(1-&gt;4)-alpha-D-glucosyl](n) + ADP-alpha-D-glucose = [(1-&gt;4)-alpha-D-glucosyl](n+1) + ADP + H(+). Its pathway is glycan biosynthesis; glycogen biosynthesis. In terms of biological role, synthesizes alpha-1,4-glucan chains using ADP-glucose. This chain is Glycogen synthase, found in Pelodictyon phaeoclathratiforme (strain DSM 5477 / BU-1).